Here is a 137-residue protein sequence, read N- to C-terminus: Basic phospholipase A2 3 (137 aa).

An N-terminal signal peptide occupies residues 1–11; that stretch reads LVAVCVSLLGA. Residues 12–19 constitute a propeptide that is removed on maturation; sequence ANIPPQPL. 7 cysteine pairs are disulfide-bonded: Cys30/Cys89, Cys44/Cys136, Cys46/Cys62, Cys61/Cys117, Cys68/Cys110, Cys78/Cys103, and Cys96/Cys108. Ca(2+) contacts are provided by Tyr45, Gly47, and Gly49. Residue His65 is part of the active site. Residue Asp66 participates in Ca(2+) binding. Asp111 is an active-site residue.

It belongs to the phospholipase A2 family. Group I subfamily. D49 sub-subfamily. As to quaternary structure, monomer, or homotrimer. Was firstly described as a trimer, but has been reinterpreted with the possibility of being a monomer. Requires Ca(2+) as cofactor. In terms of tissue distribution, expressed by the venom gland.

The protein resides in the secreted. It carries out the reaction a 1,2-diacyl-sn-glycero-3-phosphocholine + H2O = a 1-acyl-sn-glycero-3-phosphocholine + a fatty acid + H(+). Functionally, snake venom phospholipase A2 (PLA2) that shows anticoagulant and neurotoxic activities. PLA2 catalyzes the calcium-dependent hydrolysis of the 2-acyl groups in 3-sn-phosphoglycerides. The protein is Basic phospholipase A2 3 of Bungarus caeruleus (Indian krait).